A 358-amino-acid polypeptide reads, in one-letter code: Short chain dehydrogenase sor7 (358 aa).

The segment at 1–22 (MSSPAIGQPPIPPTPTDANISG) is disordered. 7 residues coordinate NADP(+): Leu34, Asp88, Asn115, Tyr206, Lys210, Val238, and Thr240. The active-site Proton donor is Tyr206. The Lowers pKa of active site Tyr role is filled by Lys210.

It belongs to the short-chain dehydrogenases/reductases (SDR) family.

The protein operates within secondary metabolite biosynthesis. In terms of biological role, short chain dehydrogenase; part of the SOR gene cluster that mediates the biosynthesis of sorbicillinoids, a diverse group of yellow secondary metabolites that restrict growth of competing pathogenic fungi but not of bacteria. Sorbicillinoids biosynthesis requires the action of two PKSs. The SOR cluster is required for the production of trichodimerol and dihydrotrichotetronin, with sor2 being sufficient for production of trichodimerol, but not dihydrotrichotetronin in the light. Sor1 iteratively combines three acetyl units and the growing chain is modified by the ketoacyl reductase subunit, and optional by the enoyl reductase subunit in the second cycle. The polyketide is then handed over to the PKS sor2, which adds three more acetyl units, and two methyl groups. Sor2 releases an aldehyde, which undergoes spontaneous cyclization resulting in the formation of sorbicillin or 2',3'-dihydrosorbicillin. The monooxygenase sor5 oxidizes sorbicillin and 2',3'-dihydrosorbicillin to 2',3'-dihydrosorbicillinol and sorbicillinol, respectively. The oxidoreductase sor8 further converts sorbicillinol into oxosorbicillinol. Sorbicillinol is the building block for the other sorbicillinoids such as disorbicillinol, bisvertinolon, dihydrobisvertinolone, and dihydrotrichotetronine. The sequence is that of Short chain dehydrogenase sor7 from Hypocrea jecorina (strain QM6a) (Trichoderma reesei).